A 157-amino-acid polypeptide reads, in one-letter code: Transcription elongation factor GreA (157 aa).

Belongs to the GreA/GreB family.

Functionally, necessary for efficient RNA polymerase transcription elongation past template-encoded arresting sites. The arresting sites in DNA have the property of trapping a certain fraction of elongating RNA polymerases that pass through, resulting in locked ternary complexes. Cleavage of the nascent transcript by cleavage factors such as GreA or GreB allows the resumption of elongation from the new 3'terminus. GreA releases sequences of 2 to 3 nucleotides. The protein is Transcription elongation factor GreA of Mesorhizobium japonicum (strain LMG 29417 / CECT 9101 / MAFF 303099) (Mesorhizobium loti (strain MAFF 303099)).